The sequence spans 200 residues: Probable GTP-binding protein EngB (200 aa).

Residues 24–199 (EGAEVAFAGR…RGVIGGWLGL (176 aa)) enclose the EngB-type G domain. GTP contacts are provided by residues 32 to 39 (GRSNAGKS), 59 to 63 (GRTQQ), 77 to 80 (DLPG), 144 to 147 (TKAD), and 178 to 180 (FSG). Mg(2+) contacts are provided by S39 and T61.

Belongs to the TRAFAC class TrmE-Era-EngA-EngB-Septin-like GTPase superfamily. EngB GTPase family. Mg(2+) is required as a cofactor.

Necessary for normal cell division and for the maintenance of normal septation. In Stenotrophomonas maltophilia (strain K279a), this protein is Probable GTP-binding protein EngB.